Reading from the N-terminus, the 356-residue chain is Peptide methionine sulfoxide reductase MsrA/MsrB (356 aa).

A peptide methionine sulfoxide reductase A region spans residues 46–199 (HEIYLAGGCF…PNGYCHIDLE (154 aa)). Cys54 is a catalytic residue. In terms of domain architecture, MsrB spans 216–339 (DAELKAKLTP…NSAAVKFIPL (124 aa)). The active-site Nucleophile is Cys328.

In the N-terminal section; belongs to the MsrA Met sulfoxide reductase family. It in the C-terminal section; belongs to the MsrB Met sulfoxide reductase family.

It carries out the reaction L-methionyl-[protein] + [thioredoxin]-disulfide + H2O = L-methionyl-(S)-S-oxide-[protein] + [thioredoxin]-dithiol. It catalyses the reaction [thioredoxin]-disulfide + L-methionine + H2O = L-methionine (S)-S-oxide + [thioredoxin]-dithiol. The enzyme catalyses L-methionyl-[protein] + [thioredoxin]-disulfide + H2O = L-methionyl-(R)-S-oxide-[protein] + [thioredoxin]-dithiol. Functionally, has an important function as a repair enzyme for proteins that have been inactivated by oxidation. Catalyzes the reversible oxidation-reduction of methionine sulfoxide in proteins to methionine. The sequence is that of Peptide methionine sulfoxide reductase MsrA/MsrB (msrAB) from Aggregatibacter actinomycetemcomitans (Actinobacillus actinomycetemcomitans).